The following is a 607-amino-acid chain: Guanine nucleotide-binding protein-like 1 (607 aa).

Positions 1-14 (MPRKKPFSVKQKKK) are enriched in basic residues. Residues 1–81 (MPRKKPFSVK…GPRGYDPNRY (81 aa)) are disordered. Residues 15–26 (QLQDKRERKRGL) show a composition bias toward basic and acidic residues. Phosphoserine is present on residues Ser32, Ser33, and Ser34. Phosphothreonine occurs at positions 48 and 50. 2 positions are modified to phosphoserine: Ser51 and Ser68. In terms of domain architecture, CP-type G spans 178-418 (WRQLWRVLEM…LCDCPGLIFP (241 aa)). A GTP-binding site is contributed by 225–228 (NKVD). Ser324 is modified (phosphoserine). Residues 367-374 (GFPNVGKS) and 411-415 (DCPGL) each bind GTP. Positions 547–607 (GPAGDEEEEE…PYALLGEDEC (61 aa)) are disordered. Residues 550–584 (GDEEEEEEEELSSSCEEEGEEDRDADEEGEGDEDT) are compositionally biased toward acidic residues. 3 positions are modified to phosphoserine: Ser561, Ser562, and Ser563.

It belongs to the TRAFAC class YlqF/YawG GTPase family.

Possible regulatory or functional link with the histocompatibility cluster. This chain is Guanine nucleotide-binding protein-like 1 (GNL1), found in Macaca fascicularis (Crab-eating macaque).